The sequence spans 435 residues: ATP-dependent protease ATPase subunit HslU (435 aa).

ATP is bound by residues I18, 60–65 (GVGKTE), D248, E313, and R385.

Belongs to the ClpX chaperone family. HslU subfamily. As to quaternary structure, a double ring-shaped homohexamer of HslV is capped on each side by a ring-shaped HslU homohexamer. The assembly of the HslU/HslV complex is dependent on binding of ATP.

It localises to the cytoplasm. Functionally, ATPase subunit of a proteasome-like degradation complex; this subunit has chaperone activity. The binding of ATP and its subsequent hydrolysis by HslU are essential for unfolding of protein substrates subsequently hydrolyzed by HslV. HslU recognizes the N-terminal part of its protein substrates and unfolds these before they are guided to HslV for hydrolysis. This Rhizobium johnstonii (strain DSM 114642 / LMG 32736 / 3841) (Rhizobium leguminosarum bv. viciae) protein is ATP-dependent protease ATPase subunit HslU.